Reading from the N-terminus, the 30-residue chain is M-poneritoxin-Nc3a (30 aa).

The protein belongs to the ponericin-G family. In terms of tissue distribution, expressed by the venom gland.

It is found in the secreted. The protein resides in the target cell membrane. Its function is as follows. Membrane-perturbating peptide with multiple activities. It is insecticidal, since it induces contractile paralysis in insects (L.cuprina) during several hours and death after 24 hours. It shows a relatively strong and broad-spectrum antibacterial activity against both Gram-positive and Gram-negative bacteria (MIC&lt;20 uM). It is also antiparasitic, since it potently inhibits the larval development of the major pathogenic nematode of ruminants (H.contortus, IC(50)=5.6 uM) and reduces the motility of adult males of the other nematode B.malayi. It also shows cytotoxic activity against HEK293 cells (EC(50)=5-7 uM) but does not induce hemolysis in human erythrocytes. In addition, it causes a moderate increase in intracellular calcium concentration on neuronal and epithelial cell lines, which supports a non-specific membrane perturbation mechanism of action. In vivo, it induces pain by intraplantar injection into mice, suggesting a defensive function against vertebrate predators. The polypeptide is M-poneritoxin-Nc3a (Neoponera commutata (Large hunting ant)).